Here is a 358-residue protein sequence, read N- to C-terminus: Beta-lactamase (358 aa).

The Acyl-ester intermediate role is filled by Ser-60. Tyr-146 serves as the catalytic Proton acceptor. 311–313 (KTG) is a substrate binding site.

Belongs to the class-C beta-lactamase family.

It is found in the periplasm. The enzyme catalyses a beta-lactam + H2O = a substituted beta-amino acid. Functionally, this protein is a serine beta-lactamase with a substrate specificity for cephalosporins. This chain is Beta-lactamase, found in Pseudomonas fluorescens.